We begin with the raw amino-acid sequence, 281 residues long: 39kDa core protein OPG130 (281 aa).

Polar residues predominate over residues 1–22; that stretch reads MDFFNKFSQGLAESSTPKSSIY. 3 disordered regions span residues 1 to 33, 91 to 112, and 149 to 192; these read MDFF…DTKK, ILLP…TSSD, and NKDQ…PQPP. Residues 24-33 are compositionally biased toward basic and acidic residues; that stretch reads SEEKDPDTKK. Positions 94 to 112 are enriched in polar residues; that stretch reads PSSTAPTPKPRQQTNTSSD. Over residues 154-175 the composition is skewed to low complexity; the sequence is TTTPPSTQPSQTLPTTTCTQQS.

The protein belongs to the orthopoxvirus OPG130 family. Interacts with OPG136 and its cleaved form. In terms of processing, its phosphorylation state is regulated by the OPG054 kinase and the OPG106 phosphatase.

The protein resides in the virion. Its subcellular location is the host endoplasmic reticulum-Golgi intermediate compartment membrane. In terms of biological role, component of the virion core. Participates in virion assembly. The chain is 39kDa core protein OPG130 (OPG130) from Vaccinia virus (strain Copenhagen) (VACV).